A 149-amino-acid chain; its full sequence is MKVILLHALEKLGKKGQLITVKNGYARNYLIPLEKALLATSENIKIFEKKRLFEEQQEAKKIDYANSRIKAIKLIGAIIFFMKSSKKRKIFGSIGVKDISKQLISLGLLIKKNEIKLPNGLLHYLGSHTVLFTPYKNISTEFKVVILSK.

It belongs to the bacterial ribosomal protein bL9 family.

In terms of biological role, binds to the 23S rRNA. In Buchnera aphidicola subsp. Cinara cedri (strain Cc), this protein is Large ribosomal subunit protein bL9.